The primary structure comprises 98 residues: Protein Vpr (98 aa).

The homooligomerization stretch occupies residues 1–42 (MEQLPEDQGPQREPYNEWTLEILEELKREAVRHFPRDWLHQL). A phosphoserine; by host mark is found at Ser-79 and Ser-98.

It belongs to the HIV-1 VPR protein family. Homooligomer, may form homodimer. Interacts with p6-gag region of the Pr55 Gag precursor protein through a (Leu-X-X)4 motif near the C-terminus of the P6gag protein. Interacts with host UNG. May interact with host RAD23A/HHR23A. Interacts with host VPRBP/DCAF1, leading to hijack the CUL4A-RBX1-DDB1-DCAF1/VPRBP complex, mediating ubiquitination of host proteins such as TERT and ZGPAT and arrest of the cell cycle in G2 phase. Post-translationally, phosphorylated on several residues by host. These phosphorylations regulate VPR activity for the nuclear import of the HIV-1 pre-integration complex.

Its subcellular location is the virion. The protein resides in the host nucleus. It is found in the host extracellular space. Its function is as follows. During virus replication, may deplete host UNG protein, and incude G2-M cell cycle arrest. Acts by targeting specific host proteins for degradation by the 26S proteasome, through association with the cellular CUL4A-DDB1 E3 ligase complex by direct interaction with host VPRPB/DCAF-1. Cell cycle arrest reportedly occurs within hours of infection and is not blocked by antiviral agents, suggesting that it is initiated by the VPR carried into the virion. Additionally, VPR induces apoptosis in a cell cycle dependent manner suggesting that these two effects are mechanistically linked. Detected in the serum and cerebrospinal fluid of AIDS patient, VPR may also induce cell death to bystander cells. Functionally, during virus entry, plays a role in the transport of the viral pre-integration (PIC) complex to the host nucleus. This function is crucial for viral infection of non-dividing macrophages. May act directly at the nuclear pore complex, by binding nucleoporins phenylalanine-glycine (FG)-repeat regions. The polypeptide is Protein Vpr (Pan troglodytes (Chimpanzee)).